The chain runs to 99 residues: Plastocyanin B'/B'' (99 aa).

One can recognise a Plastocyanin-like domain in the interval Ile-1–Asn-99. Cu cation-binding residues include His-37, Cys-84, His-87, and Met-92.

The protein belongs to the plastocyanin family. The cofactor is Cu(2+).

The protein localises to the plastid. It is found in the chloroplast thylakoid membrane. Functionally, participates in electron transfer between P700 and the cytochrome b6-f complex in photosystem I. This chain is Plastocyanin B'/B'', found in Nicotiana tabacum (Common tobacco).